A 221-amino-acid chain; its full sequence is Probable serine protease inhibitor 6 (221 aa).

The N-terminal stretch at 1 to 22 (MKCLFLLCLCLFPIVVFSSTFT) is a signal peptide. Residues 23 to 28 (SQNPIN) constitute a propeptide that is removed on maturation. A Vacuolar targeting signal motif is present at residues 25–30 (NPINLP). 2 disulfide bridges follow: cysteine 76/cysteine 125 and cysteine 174/cysteine 191.

The protein belongs to the protease inhibitor I3 (leguminous Kunitz-type inhibitor) family.

The protein resides in the vacuole. Its function is as follows. Inhibitor of trypsin (serine protease). May protect the plant by inhibiting proteases of invading organisms. The sequence is that of Probable serine protease inhibitor 6 from Solanum tuberosum (Potato).